The chain runs to 131 residues: Protein TAP2 (131 aa).

An N-terminal signal peptide occupies residues 1–22; that stretch reads MAKSSPTYTVLFLLGLLALSTA. The segment at 75 to 101 is disordered; the sequence is ARSGGETDVKKMEGSMPDQGKTAGRDQ.

As to expression, tapetum of anthers.

The polypeptide is Protein TAP2 (TAP2) (Antirrhinum majus (Garden snapdragon)).